The chain runs to 428 residues: 3-phosphoshikimate 1-carboxyvinyltransferase (428 aa).

Lys23, Ser24, and Arg28 together coordinate 3-phosphoshikimate. Lys23 lines the phosphoenolpyruvate pocket. Gly97 and Arg125 together coordinate phosphoenolpyruvate. Positions 170, 171, 172, 198, 314, 337, and 341 each coordinate 3-phosphoshikimate. Gln172 contacts phosphoenolpyruvate. Residue Asp314 is the Proton acceptor of the active site. Arg345, Arg387, and Lys412 together coordinate phosphoenolpyruvate.

Belongs to the EPSP synthase family. Monomer.

Its subcellular location is the cytoplasm. It carries out the reaction 3-phosphoshikimate + phosphoenolpyruvate = 5-O-(1-carboxyvinyl)-3-phosphoshikimate + phosphate. It functions in the pathway metabolic intermediate biosynthesis; chorismate biosynthesis; chorismate from D-erythrose 4-phosphate and phosphoenolpyruvate: step 6/7. Catalyzes the transfer of the enolpyruvyl moiety of phosphoenolpyruvate (PEP) to the 5-hydroxyl of shikimate-3-phosphate (S3P) to produce enolpyruvyl shikimate-3-phosphate and inorganic phosphate. This is 3-phosphoshikimate 1-carboxyvinyltransferase from Edwardsiella ictaluri (strain 93-146).